The following is a 557-amino-acid chain: Dihydroxy-acid dehydratase (557 aa).

Cysteine 50 contacts [2Fe-2S] cluster. Aspartate 82 serves as a coordination point for Mg(2+). Cysteine 123 provides a ligand contact to [2Fe-2S] cluster. Mg(2+)-binding residues include aspartate 124 and lysine 125. The residue at position 125 (lysine 125) is an N6-carboxylysine. Cysteine 195 is a [2Fe-2S] cluster binding site. Glutamate 447 lines the Mg(2+) pocket. Serine 473 serves as the catalytic Proton acceptor.

Belongs to the IlvD/Edd family. In terms of assembly, homodimer. It depends on [2Fe-2S] cluster as a cofactor. The cofactor is Mg(2+).

The enzyme catalyses (2R)-2,3-dihydroxy-3-methylbutanoate = 3-methyl-2-oxobutanoate + H2O. The catalysed reaction is (2R,3R)-2,3-dihydroxy-3-methylpentanoate = (S)-3-methyl-2-oxopentanoate + H2O. It functions in the pathway amino-acid biosynthesis; L-isoleucine biosynthesis; L-isoleucine from 2-oxobutanoate: step 3/4. It participates in amino-acid biosynthesis; L-valine biosynthesis; L-valine from pyruvate: step 3/4. Functions in the biosynthesis of branched-chain amino acids. Catalyzes the dehydration of (2R,3R)-2,3-dihydroxy-3-methylpentanoate (2,3-dihydroxy-3-methylvalerate) into 2-oxo-3-methylpentanoate (2-oxo-3-methylvalerate) and of (2R)-2,3-dihydroxy-3-methylbutanoate (2,3-dihydroxyisovalerate) into 2-oxo-3-methylbutanoate (2-oxoisovalerate), the penultimate precursor to L-isoleucine and L-valine, respectively. The chain is Dihydroxy-acid dehydratase from Burkholderia mallei (strain NCTC 10247).